Consider the following 426-residue polypeptide: Serine--tRNA ligase (426 aa).

L-serine is bound at residue 235–237 (TAE). 266–268 (RRE) contributes to the ATP binding site. Glu289 is an L-serine binding site. 353-356 (EISS) contributes to the ATP binding site. Ser389 lines the L-serine pocket.

The protein belongs to the class-II aminoacyl-tRNA synthetase family. Type-1 seryl-tRNA synthetase subfamily. As to quaternary structure, homodimer. The tRNA molecule binds across the dimer.

Its subcellular location is the cytoplasm. It catalyses the reaction tRNA(Ser) + L-serine + ATP = L-seryl-tRNA(Ser) + AMP + diphosphate + H(+). The enzyme catalyses tRNA(Sec) + L-serine + ATP = L-seryl-tRNA(Sec) + AMP + diphosphate + H(+). It functions in the pathway aminoacyl-tRNA biosynthesis; selenocysteinyl-tRNA(Sec) biosynthesis; L-seryl-tRNA(Sec) from L-serine and tRNA(Sec): step 1/1. Its function is as follows. Catalyzes the attachment of serine to tRNA(Ser). Is also able to aminoacylate tRNA(Sec) with serine, to form the misacylated tRNA L-seryl-tRNA(Sec), which will be further converted into selenocysteinyl-tRNA(Sec). This chain is Serine--tRNA ligase, found in Trichormus variabilis (strain ATCC 29413 / PCC 7937) (Anabaena variabilis).